The sequence spans 451 residues: Gamma-aminobutyric acid receptor subunit alpha-2 (451 aa).

Residues 1–28 form the signal peptide; the sequence is MRTKLSTCNVWFPLLVLLVWNPARLVLA. Residues 29 to 249 are Extracellular-facing; sequence NIQEDEAKNN…MTAHFHLKRK (221 aa). Residue Asn38 is glycosylated (N-linked (GlcNAc...) asparagine). 4-aminobutanoate is bound at residue Arg94. Asn114 and Asn138 each carry an N-linked (GlcNAc...) asparagine glycan. Thr157 serves as a coordination point for 4-aminobutanoate. The cysteines at positions 166 and 180 are disulfide-linked. The next 3 membrane-spanning stretches (helical) occupy residues 250 to 270, 281 to 300, and 312 to 332; these read IGYF…LSQV, ARTV…SISA, and AMDW…IEFA. Residues 333-420 are Cytoplasmic-facing; that stretch reads TVNYFTKRGW…FNSVSKIDRM (88 aa). Positions 389 to 408 are disordered; sequence KSATTPEPNKKPENKPAEAK. Over residues 396–408 the composition is skewed to basic and acidic residues; it reads PNKKPENKPAEAK. A helical membrane pass occupies residues 421-441; sequence SRIVFPVLFGTFNLVYWATYL. Over 442-451 the chain is Extracellular; the sequence is NREPVLGVSP.

It belongs to the ligand-gated ion channel (TC 1.A.9) family. Gamma-aminobutyric acid receptor (TC 1.A.9.5) subfamily. GABRA2 sub-subfamily. Heteropentamer, formed by a combination of alpha (GABRA1-6), beta (GABRB1-3), gamma (GABRG1-3), delta (GABRD), epsilon (GABRE), rho (GABRR1-3), pi (GABRP) and theta (GABRQ) subunits, each subunit exhibiting distinct physiological and pharmacological properties. Binds UBQLN1. Interacts with KIF21B. Interacts with LHFPL4. Interacts with SHISA7; interaction leads to the regulation of GABA(A) receptor trafficking, channel deactivation kinetics and pharmacology. Post-translationally, glycosylated. As to expression, expressed in brain (at protein level).

The protein resides in the postsynaptic cell membrane. It is found in the cell membrane. It localises to the cytoplasmic vesicle membrane. Its subcellular location is the cell projection. The protein localises to the dendrite. The enzyme catalyses chloride(in) = chloride(out). Its activity is regulated as follows. Activated by pentobarbital. Inhibited by the antagonist bicuculline. Its function is as follows. Alpha subunit of the heteropentameric ligand-gated chloride channel gated by gamma-aminobutyric acid (GABA), a major inhibitory neurotransmitter in the brain. GABA-gated chloride channels, also named GABA(A) receptors (GABAAR), consist of five subunits arranged around a central pore and contain GABA active binding site(s) located at the alpha and beta subunit interface(s). When activated by GABA, GABAARs selectively allow the flow of chloride anions across the cell membrane down their electrochemical gradient. Chloride influx into the postsynaptic neuron following GABAAR opening decreases the neuron ability to generate a new action potential, thereby reducing nerve transmission. The alpha-2 subunit exhibits synaptogenic activity together with beta-2 and very little to no activity together with beta-3, the gamma-2 subunit being necessary but not sufficient to induce rapid synaptic contacts formation. In Rattus norvegicus (Rat), this protein is Gamma-aminobutyric acid receptor subunit alpha-2.